Reading from the N-terminus, the 192-residue chain is dTTP/UTP pyrophosphatase (192 aa).

Residue D71 is the Proton acceptor of the active site.

Belongs to the Maf family. YhdE subfamily. The cofactor is a divalent metal cation.

It is found in the cytoplasm. The enzyme catalyses dTTP + H2O = dTMP + diphosphate + H(+). The catalysed reaction is UTP + H2O = UMP + diphosphate + H(+). Its function is as follows. Nucleoside triphosphate pyrophosphatase that hydrolyzes dTTP and UTP. May have a dual role in cell division arrest and in preventing the incorporation of modified nucleotides into cellular nucleic acids. This chain is dTTP/UTP pyrophosphatase, found in Pseudoalteromonas atlantica (strain T6c / ATCC BAA-1087).